A 349-amino-acid polypeptide reads, in one-letter code: Hyaluronidase Tab y 2.0101 (349 aa).

A signal peptide spans 1–25 (MKLHQGLVCLSVLILLPTCILGDRK). Disulfide bonds link Cys-37-Cys-328 and Cys-205-Cys-216. N-linked (GlcNAc...) asparagine glycans are attached at residues Asn-41, Asn-81, Asn-99, and Asn-119. Glu-129 (proton donor) is an active-site residue. Asn-147 carries an N-linked (GlcNAc...) asparagine glycan. N-linked (GlcNAc...) asparagine glycosylation is found at Asn-251 and Asn-297.

Belongs to the glycosyl hydrolase 56 family. As to expression, expressed in salivary glands.

It is found in the secreted. It catalyses the reaction Random hydrolysis of (1-&gt;4)-linkages between N-acetyl-beta-D-glucosamine and D-glucuronate residues in hyaluronate.. In terms of biological role, hydrolyzes high molecular weight hyaluronic acid to produce small oligosaccharides. The protein is Hyaluronidase Tab y 2.0101 of Tabanus yao (Horsefly).